The chain runs to 102 residues: Small ribosomal subunit protein uS10 (102 aa).

Belongs to the universal ribosomal protein uS10 family. As to quaternary structure, part of the 30S ribosomal subunit.

Its function is as follows. Involved in the binding of tRNA to the ribosomes. The sequence is that of Small ribosomal subunit protein uS10 from Nitrosopumilus maritimus (strain SCM1).